Consider the following 358-residue polypeptide: Glyoxylate/succinic semialdehyde reductase 2, chloroplastic (358 aa).

A chloroplast-targeting transit peptide spans 1-44 (MPLVSLSFASSSSKAMALCSICPRIPLRFRPKPISPFLSKPQIC). NADP(+) is bound by residues 70–84 (GFLGMGIMGSPMAQN) and T161. K236 is an active-site residue. K304 is a binding site for NADP(+).

Belongs to the HIBADH-related family. NP60 subfamily.

The protein resides in the plastid. It localises to the chloroplast stroma. It carries out the reaction glycolate + NADP(+) = glyoxylate + NADPH + H(+). It catalyses the reaction 4-hydroxybutanoate + NADP(+) = succinate semialdehyde + NADPH + H(+). The ratio of NADPH/NADP(+) may regulate enzymatic activity. Catalyzes the NADPH-dependent reduction of glyoxylate to glycolate as well as succinic semialdehyde (SSA) to gamma-hydroxybutyrate in vitro. May function in redox homeostasis and play a role in oxidative stress tolerance by detoxifying glyoxylate and SSA generated in glycolate metabolism and GABA metabolism, respectively. The polypeptide is Glyoxylate/succinic semialdehyde reductase 2, chloroplastic (GLYR2) (Arabidopsis thaliana (Mouse-ear cress)).